The following is a 189-amino-acid chain: Putative OVARIAN TUMOR DOMAIN-containing deubiquitinating enzyme 8 (189 aa).

Positions 1–103 (MMKSDGNCQF…GIHFNSIYKK (103 aa)) constitute an OTU domain. Aspartate 5 is an active-site residue. Cysteine 8 (nucleophile) is an active-site residue. Histidine 96 is an active-site residue. The tract at residues 105–189 (KEKGSRSSSS…NRNHHFHYSE (85 aa)) is disordered. A coiled-coil region spans residues 120–181 (WMKLQRKKEN…KKEKKEKKNR (62 aa)). 2 short sequence motifs (nuclear localization signal) span residues 125–132 (RKKENEAK) and 163–170 (KKKAKVQK). Residues 126 to 174 (KKENEAKKKEEEEKERKDMEKEEKKKDKEDKKKDKEDKKKAKVQKEKKE) are compositionally biased toward basic and acidic residues. Positions 175 to 189 (KKEKKNRNHHFHYSE) are enriched in basic residues.

The protein belongs to the peptidase C85 family.

Its subcellular location is the nucleus. The catalysed reaction is Thiol-dependent hydrolysis of ester, thioester, amide, peptide and isopeptide bonds formed by the C-terminal Gly of ubiquitin (a 76-residue protein attached to proteins as an intracellular targeting signal).. Functionally, hydrolase that can remove conjugated ubiquitin from proteins in vitro and may therefore play an important regulatory role at the level of protein turnover by preventing degradation. The sequence is that of Putative OVARIAN TUMOR DOMAIN-containing deubiquitinating enzyme 8 from Arabidopsis thaliana (Mouse-ear cress).